A 143-amino-acid polypeptide reads, in one-letter code: Large ribosomal subunit protein uL13 (143 aa).

It belongs to the universal ribosomal protein uL13 family. As to quaternary structure, part of the 50S ribosomal subunit.

In terms of biological role, this protein is one of the early assembly proteins of the 50S ribosomal subunit, although it is not seen to bind rRNA by itself. It is important during the early stages of 50S assembly. This is Large ribosomal subunit protein uL13 from Variovorax paradoxus (strain S110).